A 353-amino-acid chain; its full sequence is Phospho-furanose lactonase (353 aa).

Zn(2+) contacts are provided by His24, His26, Lys153, His186, and His214. The residue at position 153 (Lys153) is an N6-carboxylysine. 244–245 lines the substrate pocket; that stretch reads KY. Asp272 serves as a coordination point for Zn(2+). 275–278 provides a ligand contact to substrate; sequence RILY.

Belongs to the metallo-dependent hydrolases superfamily. Phosphotriesterase family. The cofactor is Zn(2+).

It carries out the reaction a 1,4-lactone + H2O = a 4-hydroxyacid + H(+). The catalysed reaction is D-xylono-1,4-lactone 5-phosphate + H2O = 5-phospho-D-xylonate + H(+). The enzyme catalyses L-arabino-1,4-lactone 5-phosphate + H2O = 5-phospho-L-arabinonate + H(+). Functionally, catalyzes the hydrolysis of D-xylono-1,4-lactone-5-phosphate and L-arabino-1,4-lactone-5-phosphate. Also able to hydrolyze carboxy 1,4-lactones. This chain is Phospho-furanose lactonase, found in Mycoplasmopsis synoviae (strain 53) (Mycoplasma synoviae).